A 381-amino-acid chain; its full sequence is Cobalt-precorrin-5B C(1)-methyltransferase (381 aa).

Belongs to the CbiD family.

The enzyme catalyses Co-precorrin-5B + S-adenosyl-L-methionine = Co-precorrin-6A + S-adenosyl-L-homocysteine. It functions in the pathway cofactor biosynthesis; adenosylcobalamin biosynthesis; cob(II)yrinate a,c-diamide from sirohydrochlorin (anaerobic route): step 6/10. Functionally, catalyzes the methylation of C-1 in cobalt-precorrin-5B to form cobalt-precorrin-6A. The protein is Cobalt-precorrin-5B C(1)-methyltransferase of Prochlorococcus marinus (strain SARG / CCMP1375 / SS120).